A 663-amino-acid polypeptide reads, in one-letter code: UvrABC system protein B (663 aa).

Residues 31 to 271 (DNIEGGEKAQ…EQSISKIQAE (241 aa)) form the Helicase ATP-binding domain. 44-51 (GATGTGKT) is a binding site for ATP. The Beta-hairpin motif lies at 97–120 (YYDYYQPEAYVPSSDTYIEKDSSV). In terms of domain architecture, Helicase C-terminal spans 435 to 601 (QMDDLLGEIN…TIKKDIRDLI (167 aa)). Residues 627–662 (QEAIKQLQKNMQEAAELLDFELAAQLRDLILELKAM) enclose the UVR domain.

It belongs to the UvrB family. In terms of assembly, forms a heterotetramer with UvrA during the search for lesions. Interacts with UvrC in an incision complex.

Its subcellular location is the cytoplasm. The UvrABC repair system catalyzes the recognition and processing of DNA lesions. A damage recognition complex composed of 2 UvrA and 2 UvrB subunits scans DNA for abnormalities. Upon binding of the UvrA(2)B(2) complex to a putative damaged site, the DNA wraps around one UvrB monomer. DNA wrap is dependent on ATP binding by UvrB and probably causes local melting of the DNA helix, facilitating insertion of UvrB beta-hairpin between the DNA strands. Then UvrB probes one DNA strand for the presence of a lesion. If a lesion is found the UvrA subunits dissociate and the UvrB-DNA preincision complex is formed. This complex is subsequently bound by UvrC and the second UvrB is released. If no lesion is found, the DNA wraps around the other UvrB subunit that will check the other stand for damage. The protein is UvrABC system protein B of Streptococcus equi subsp. zooepidemicus (strain H70).